Reading from the N-terminus, the 147-residue chain is Diaminohydroxyphosphoribosylamino-pyrimidine deaminase (147 aa).

A CMP/dCMP-type deaminase domain is found at 1–122 (MKDRFYMTRA…LYLRKKGISV (122 aa)). Residue His-50 participates in Zn(2+) binding. The Proton donor role is filled by Glu-52. Cys-75 and Cys-84 together coordinate Zn(2+).

It belongs to the cytidine and deoxycytidylate deaminase family. Zn(2+) is required as a cofactor.

The catalysed reaction is 2,5-diamino-6-hydroxy-4-(5-phosphoribosylamino)-pyrimidine + H2O + H(+) = 5-amino-6-(5-phospho-D-ribosylamino)uracil + NH4(+). Its pathway is cofactor biosynthesis; riboflavin biosynthesis; 5-amino-6-(D-ribitylamino)uracil from GTP: step 2/4. In Buchnera aphidicola subsp. Schizaphis graminum (strain Sg), this protein is Diaminohydroxyphosphoribosylamino-pyrimidine deaminase (ribD1).